The following is a 369-amino-acid chain: Chorismate synthase (369 aa).

Residues Arg48 and Arg54 each coordinate NADP(+). FMN contacts are provided by residues Arg125–Ser127, Asn238–Ala239, Gly278, Lys293–Ser297, and Arg319.

It belongs to the chorismate synthase family. Homotetramer. FMNH2 serves as cofactor.

It carries out the reaction 5-O-(1-carboxyvinyl)-3-phosphoshikimate = chorismate + phosphate. Its pathway is metabolic intermediate biosynthesis; chorismate biosynthesis; chorismate from D-erythrose 4-phosphate and phosphoenolpyruvate: step 7/7. Functionally, catalyzes the anti-1,4-elimination of the C-3 phosphate and the C-6 proR hydrogen from 5-enolpyruvylshikimate-3-phosphate (EPSP) to yield chorismate, which is the branch point compound that serves as the starting substrate for the three terminal pathways of aromatic amino acid biosynthesis. This reaction introduces a second double bond into the aromatic ring system. The polypeptide is Chorismate synthase (Cupriavidus necator (strain ATCC 17699 / DSM 428 / KCTC 22496 / NCIMB 10442 / H16 / Stanier 337) (Ralstonia eutropha)).